The following is a 312-amino-acid chain: MADAPRTVLISGCSSGIGLELAVQLAHDPRQRYQVVATMRDLGKKGTLETAAGEALGQTLTVAQLDVCSDESVAQCLNCIQGGEVDVLVNNAGVGLVGPLEGLSLAAMQNVFDTNFFGAVRLVKAVLPSMKRRRQGHIVVVSSVMGLQGVVFNEVYAASKFAMEGFFESLAVQLLQFNIFISLVEPGPVVTEFEGKLLEQVSTAEFPGTDPDTLSYFRDLYLPASRELFHNVGQSPQDVAKVIVKVIGSARPPLRRRTNTRYTPLIALKAMDPSGSLYVRTSHCLLFRWPRLLNLGLRCLACSCFRTPVWPR.

9–18 lines the NADP(+) pocket; that stretch reads LISGCSSGIG. The next 3 membrane-spanning stretches (helical) occupy residues 87–107, 138–158, and 170–190; these read VLVNNAGVGLVGPLEGLSLAA, IVVVSSVMGLQGVVFNEVYAA, and LAVQLLQFNIFISLVEPGPVV. Residue Ser-143 participates in substrate binding. Residue Tyr-156 is the Proton acceptor of the active site.

Belongs to the short-chain dehydrogenases/reductases (SDR) family. As to expression, detected in photoreceptor outer segments in the retina (at protein level).

Its subcellular location is the membrane. The enzyme catalyses all-trans-retinol + NADP(+) = all-trans-retinal + NADPH + H(+). Retinol dehydrogenase with a clear preference for NADP. Converts all-trans-retinal to all-trans-retinol. May play a role in the regeneration of visual pigment at high light intensity. The chain is Retinol dehydrogenase 8 (RDH8) from Bos taurus (Bovine).